Reading from the N-terminus, the 113-residue chain is T cell receptor alpha variable 8-6 (113 aa).

The signal sequence occupies residues 1–20; that stretch reads MLLLLVPAFQVIFTLGGTRA. Residues 21–113 enclose the Ig-like domain; the sequence is QSVTQLDSQV…DTAEYFCAVS (93 aa). An intrachain disulfide couples Cys-42 to Cys-110. Residues Asn-43 and Asn-87 are each glycosylated (N-linked (GlcNAc...) asparagine).

Alpha-beta TR is a heterodimer composed of an alpha and beta chain; disulfide-linked. The alpha-beta TR is associated with the transmembrane signaling CD3 coreceptor proteins to form the TR-CD3 (TcR or TCR). The assembly of alpha-beta TR heterodimers with CD3 occurs in the endoplasmic reticulum where a single alpha-beta TR heterodimer associates with one CD3D-CD3E heterodimer, one CD3G-CD3E heterodimer and one CD247 homodimer forming a stable octameric structure. CD3D-CD3E and CD3G-CD3E heterodimers preferentially associate with TR alpha and TR beta chains, respectively. The association of the CD247 homodimer is the last step of TcR assembly in the endoplasmic reticulum and is required for transport to the cell surface.

The protein resides in the cell membrane. V region of the variable domain of T cell receptor (TR) alpha chain that participates in the antigen recognition. Alpha-beta T cell receptors are antigen specific receptors which are essential to the immune response and are present on the cell surface of T lymphocytes. Recognize peptide-major histocompatibility (MH) (pMH) complexes that are displayed by antigen presenting cells (APC), a prerequisite for efficient T cell adaptive immunity against pathogens. Binding of alpha-beta TR to pMH complex initiates TR-CD3 clustering on the cell surface and intracellular activation of LCK that phosphorylates the ITAM motifs of CD3G, CD3D, CD3E and CD247 enabling the recruitment of ZAP70. In turn ZAP70 phosphorylates LAT, which recruits numerous signaling molecules to form the LAT signalosome. The LAT signalosome propagates signal branching to three major signaling pathways, the calcium, the mitogen-activated protein kinase (MAPK) kinase and the nuclear factor NF-kappa-B (NF-kB) pathways, leading to the mobilization of transcription factors that are critical for gene expression and essential for T cell growth and differentiation. The T cell repertoire is generated in the thymus, by V-(D)-J rearrangement. This repertoire is then shaped by intrathymic selection events to generate a peripheral T cell pool of self-MH restricted, non-autoaggressive T cells. Post-thymic interaction of alpha-beta TR with the pMH complexes shapes TR structural and functional avidity. This Homo sapiens (Human) protein is T cell receptor alpha variable 8-6.